Reading from the N-terminus, the 620-residue chain is MSPEALSELISSIAHNLVAAGQAGTLTDDLIPPVDKLAVMRPKDRAHGDWASNIAMQLAKKAGMKPRDLAEPFAAALAEADGIAKVEVAGPGFINITLDSASAAAVVDTVLAAGAVTDTDKHLNKVNEYGRNAHLGGQTLNLEFVSANPTGPIHIGGTRWAAVGDAMARVLEANGAKVVREYYFNDHGEQINRFAKSLVAAWAEANNLGDAGYQTETPCDGYKGAYINEIAARVQAEAESDGVDLTALAHQDQGLNDDGEPLGEADTEVREEFRKRAVPMMFDEIQKSMKDFRVNFDVWFHENSLYADGKVDAAIEELKSRGDIFDKDGATWFESTKHGDDKDRVIIKSNGEFAYFAADIAYYWDKRHRAENPADVAIYMLGADHHGYIGRMMAMCAAFGDEPGKNMQILIGQLVNVMKDGKPVRMSKRAGNVVTIDDLVSVVGVDAARYSLARSDYNQNFDIDLALLASHTNDNPVYYVQYAHARSKNVDRNAAVAGISYEGADLALLDTEADGEVLAALAQFPSVLATAADDRQPHKVARYLEELAATYHKWYNVERVVPMVLTDPETRGDDEARKALEIAKNPEPARAAARLKLNDAVQQVIANGLDLLGVTAPEKM.

The 'HIGH' region signature appears at 147–157; it reads ANPTGPIHIGG.

It belongs to the class-I aminoacyl-tRNA synthetase family. Monomer.

Its subcellular location is the cytoplasm. It catalyses the reaction tRNA(Arg) + L-arginine + ATP = L-arginyl-tRNA(Arg) + AMP + diphosphate. This chain is Arginine--tRNA ligase, found in Bifidobacterium longum subsp. infantis (strain ATCC 15697 / DSM 20088 / JCM 1222 / NCTC 11817 / S12).